The primary structure comprises 225 residues: MADS-box transcription factor 5 (225 aa).

The 61-residue stretch at 1 to 61 (MGRGKVELKR…GRLFEFSTSS (61 aa)) folds into the MADS-box domain. A K-box domain is found at 89-179 (ELSNYQEYLK…KRKIQETSGE (91 aa)).

May interact with the K-box of MADS6.

The protein resides in the nucleus. Functionally, probable transcription factor. The chain is MADS-box transcription factor 5 (MADS5) from Oryza sativa subsp. indica (Rice).